The following is a 462-amino-acid chain: Proline--tRNA ligase (462 aa).

It belongs to the class-II aminoacyl-tRNA synthetase family. ProS type 3 subfamily. Homodimer.

The protein localises to the cytoplasm. The enzyme catalyses tRNA(Pro) + L-proline + ATP = L-prolyl-tRNA(Pro) + AMP + diphosphate. Its function is as follows. Catalyzes the attachment of proline to tRNA(Pro) in a two-step reaction: proline is first activated by ATP to form Pro-AMP and then transferred to the acceptor end of tRNA(Pro). In Thermoplasma acidophilum (strain ATCC 25905 / DSM 1728 / JCM 9062 / NBRC 15155 / AMRC-C165), this protein is Proline--tRNA ligase.